A 529-amino-acid polypeptide reads, in one-letter code: Probable bifunctional tRNA threonylcarbamoyladenosine biosynthesis protein (529 aa).

The kae1 stretch occupies residues 1–324; the sequence is MIVLGLEGTA…FRIDEVDAPW (324 aa). Residues histidine 107, histidine 111, and tyrosine 128 each coordinate Fe cation. L-threonylcarbamoyladenylate-binding positions include 128–132, aspartate 160, glycine 173, glutamate 177, and asparagine 257; that span reads YVSGG. Aspartate 285 is a Fe cation binding site. The region spanning 329 to 529 is the Protein kinase domain; sequence SRKDYGKAGA…SAIRRRHRYV (201 aa). ATP-binding positions include 335 to 342 and lysine 355; that span reads KAGAESRI. Aspartate 447 acts as the Proton acceptor; for kinase activity in catalysis.

It in the N-terminal section; belongs to the KAE1 / TsaD family. The protein in the C-terminal section; belongs to the protein kinase superfamily. Tyr protein kinase family. BUD32 subfamily. In terms of assembly, component of the KEOPS complex that consists of Kae1, Bud32, Cgi121 and Pcc1; the whole complex dimerizes. It depends on Fe(2+) as a cofactor.

Its subcellular location is the cytoplasm. The catalysed reaction is L-seryl-[protein] + ATP = O-phospho-L-seryl-[protein] + ADP + H(+). It carries out the reaction L-threonyl-[protein] + ATP = O-phospho-L-threonyl-[protein] + ADP + H(+). It catalyses the reaction L-threonylcarbamoyladenylate + adenosine(37) in tRNA = N(6)-L-threonylcarbamoyladenosine(37) in tRNA + AMP + H(+). In terms of biological role, required for the formation of a threonylcarbamoyl group on adenosine at position 37 (t(6)A37) in tRNAs that read codons beginning with adenine. Is a component of the KEOPS complex that is probably involved in the transfer of the threonylcarbamoyl moiety of threonylcarbamoyl-AMP (TC-AMP) to the N6 group of A37. The Kae1 domain likely plays a direct catalytic role in this reaction. The Bud32 domain probably displays kinase activity that regulates Kae1 function. The chain is Probable bifunctional tRNA threonylcarbamoyladenosine biosynthesis protein from Thermoplasma acidophilum (strain ATCC 25905 / DSM 1728 / JCM 9062 / NBRC 15155 / AMRC-C165).